Consider the following 253-residue polypeptide: uncharacterized protein (253 aa).

Residues 1-14 show a composition bias toward low complexity; the sequence is MKVPILSRLRSLSS. Disordered regions lie at residues 1-192 and 212-253; these read MKVP…PKSS and PETV…AIQL. Basic and acidic residues-rich tracts occupy residues 17-30 and 45-60; these read RNNEEKNVDMEHQV and KSDKNNKHDKHDKSGE. Composition is skewed to low complexity over residues 63 to 104 and 111 to 154; these read PSTP…GSDS and KTLS…QTPR. The segment covering 215–235 has biased composition (polar residues); that stretch reads VVTSTPRQQSRPPSAQNTPNF. Positions 236 to 253 are enriched in low complexity; the sequence is TSQGGSRSTSRRQSAIQL.

This is an uncharacterized protein from Dictyostelium discoideum (Social amoeba).